Here is a 398-residue protein sequence, read N- to C-terminus: Exodeoxyribonuclease 7 large subunit (398 aa).

Belongs to the XseA family. As to quaternary structure, heterooligomer composed of large and small subunits.

It localises to the cytoplasm. The catalysed reaction is Exonucleolytic cleavage in either 5'- to 3'- or 3'- to 5'-direction to yield nucleoside 5'-phosphates.. Its function is as follows. Bidirectionally degrades single-stranded DNA into large acid-insoluble oligonucleotides, which are then degraded further into small acid-soluble oligonucleotides. This chain is Exodeoxyribonuclease 7 large subunit, found in Chlorobaculum tepidum (strain ATCC 49652 / DSM 12025 / NBRC 103806 / TLS) (Chlorobium tepidum).